Consider the following 293-residue polypeptide: Small ribosomal subunit biogenesis GTPase RsgA (293 aa).

One can recognise a CP-type G domain in the interval 63-223 (KNELVRPPIA…VADTPGFSSL (161 aa)). GTP contacts are provided by residues 112 to 115 (SKMD) and 166 to 174 (GQSGVGKSS). Zn(2+)-binding residues include cysteine 247, cysteine 252, histidine 254, and cysteine 260.

This sequence belongs to the TRAFAC class YlqF/YawG GTPase family. RsgA subfamily. In terms of assembly, monomer. Associates with 30S ribosomal subunit, binds 16S rRNA. Requires Zn(2+) as cofactor.

The protein resides in the cytoplasm. In terms of biological role, one of several proteins that assist in the late maturation steps of the functional core of the 30S ribosomal subunit. Helps release RbfA from mature subunits. May play a role in the assembly of ribosomal proteins into the subunit. Circularly permuted GTPase that catalyzes slow GTP hydrolysis, GTPase activity is stimulated by the 30S ribosomal subunit. The chain is Small ribosomal subunit biogenesis GTPase RsgA from Bacillus cytotoxicus (strain DSM 22905 / CIP 110041 / 391-98 / NVH 391-98).